Here is a 296-residue protein sequence, read N- to C-terminus: ATP synthase gamma chain (296 aa).

Belongs to the ATPase gamma chain family. As to quaternary structure, F-type ATPases have 2 components, CF(1) - the catalytic core - and CF(0) - the membrane proton channel. CF(1) has five subunits: alpha(3), beta(3), gamma(1), delta(1), epsilon(1). CF(0) has three main subunits: a, b and c.

The protein localises to the cell inner membrane. Produces ATP from ADP in the presence of a proton gradient across the membrane. The gamma chain is believed to be important in regulating ATPase activity and the flow of protons through the CF(0) complex. This is ATP synthase gamma chain from Methylorubrum extorquens (strain CM4 / NCIMB 13688) (Methylobacterium extorquens).